We begin with the raw amino-acid sequence, 669 residues long: Threonine--tRNA ligase (669 aa).

The 58-residue stretch at 3-60 (DAQQITLIVDGEETKVTEGTTGAELFFERRDVVVARVNGVLKDLDQVLTEGADVEGVT) folds into the TGS domain. The segment at 260 to 566 (DHRKLGVELD…LTEHYAGAFP (307 aa)) is catalytic. The Zn(2+) site is built by C365, H416, and H543.

The protein belongs to the class-II aminoacyl-tRNA synthetase family. Homodimer. Requires Zn(2+) as cofactor.

The protein resides in the cytoplasm. It carries out the reaction tRNA(Thr) + L-threonine + ATP = L-threonyl-tRNA(Thr) + AMP + diphosphate + H(+). Its function is as follows. Catalyzes the attachment of threonine to tRNA(Thr) in a two-step reaction: L-threonine is first activated by ATP to form Thr-AMP and then transferred to the acceptor end of tRNA(Thr). Also edits incorrectly charged L-seryl-tRNA(Thr). This chain is Threonine--tRNA ligase, found in Paenarthrobacter aurescens (strain TC1).